The primary structure comprises 554 residues: Intraflagellar transport protein 56 (554 aa).

Residues 1-27 (MMLSRAKPAVGGESPHTDKRKKKGRKI) form a disordered region. Over residues 18–27 (DKRKKKGRKI) the composition is skewed to basic residues. TPR repeat units follow at residues 57–90 (DDTNLWIGYCAFHLGDYKRALEEYENATKEENCN), 92–125 (EVWVNLACTYFFLGMYKQAEAAGFKAPKSRLQNR), 151–184 (KEDQLSLASIHYMRSHYQEAIDIYKRILLDNREY), and 468–501 (ANDCYKMGQFYYSAKAFDVLERLDPNPEYWEGKR).

It belongs to the IFT56 family. As to quaternary structure, component of the IFT complex B. Interacts with IFT46; the interaction is direct. As to expression, high expression detected in testis. Detected also retina, kidney, lung and brain tissue. The expression level is low in spleen. Expressed in the developing liver. Present in the airway epithelial cells and the testes (at protein level).

Its subcellular location is the cell projection. The protein resides in the cilium. Its function is as follows. Component of the intraflagellar transport (IFT) complex B required for transport of proteins in the motile cilium. Required for transport of specific ciliary cargo proteins related to motility, while it is neither required for IFT complex B assembly or motion nor for cilium assembly. Required for efficient coupling between the accumulation of GLI2 and GLI3 at the ciliary tips and their dissociation from the negative regulator SUFU. Plays a key role in maintaining the integrity of the IFT complex B and the proper ciliary localization of the IFT complex B components. Not required for IFT complex A ciliary localization or function. Essential for maintaining proper microtubule organization within the ciliary axoneme. The protein is Intraflagellar transport protein 56 of Mus musculus (Mouse).